A 20-amino-acid polypeptide reads, in one-letter code: Cytochrome c oxidase subunit 6A1, mitochondrial (20 aa).

The protein belongs to the cytochrome c oxidase subunit 6A family. As to quaternary structure, component of the cytochrome c oxidase (complex IV, CIV), a multisubunit enzyme composed of 14 subunits. The complex is composed of a catalytic core of 3 subunits MT-CO1, MT-CO2 and MT-CO3, encoded in the mitochondrial DNA, and 11 supernumerary subunits COX4I, COX5A, COX5B, COX6A, COX6B, COX6C, COX7A, COX7B, COX7C, COX8 and NDUFA4, which are encoded in the nuclear genome. The complex exists as a monomer or a dimer and forms supercomplexes (SCs) in the inner mitochondrial membrane with NADH-ubiquinone oxidoreductase (complex I, CI) and ubiquinol-cytochrome c oxidoreductase (cytochrome b-c1 complex, complex III, CIII), resulting in different assemblies (supercomplex SCI(1)III(2)IV(1) and megacomplex MCI(2)III(2)IV(2)). In terms of tissue distribution, liver specific isoform.

The protein resides in the mitochondrion inner membrane. Its pathway is energy metabolism; oxidative phosphorylation. In terms of biological role, component of the cytochrome c oxidase, the last enzyme in the mitochondrial electron transport chain which drives oxidative phosphorylation. The respiratory chain contains 3 multisubunit complexes succinate dehydrogenase (complex II, CII), ubiquinol-cytochrome c oxidoreductase (cytochrome b-c1 complex, complex III, CIII) and cytochrome c oxidase (complex IV, CIV), that cooperate to transfer electrons derived from NADH and succinate to molecular oxygen, creating an electrochemical gradient over the inner membrane that drives transmembrane transport and the ATP synthase. Cytochrome c oxidase is the component of the respiratory chain that catalyzes the reduction of oxygen to water. Electrons originating from reduced cytochrome c in the intermembrane space (IMS) are transferred via the dinuclear copper A center (CU(A)) of subunit 2 and heme A of subunit 1 to the active site in subunit 1, a binuclear center (BNC) formed by heme A3 and copper B (CU(B)). The BNC reduces molecular oxygen to 2 water molecules unsing 4 electrons from cytochrome c in the IMS and 4 protons from the mitochondrial matrix. This Canis lupus familiaris (Dog) protein is Cytochrome c oxidase subunit 6A1, mitochondrial (COX6A1).